A 227-amino-acid chain; its full sequence is MKLCVAFDVASYDECINLAKELKGLDLWVKIGLRSYLRDGVKLLEAIKKVDNFKIFLDLKLYDIPNTMADACEELAKLDVNMFNIHASAGKSAMCMIMERLNALSKRPLVLAVSALTSFDEQEFFSVYKQDIKQAVKDFSKISYESGLDGMVCSVYESLLIKENTSANFITLTPGIRPFKENSDDQKRVADIQCAKDNLSDFIVVGRPIYKAKEPRRICENILEHLK.

Residues Asp8, Lys30, 58–67 (DLKLYDIPNT), Thr117, Arg177, Gln186, Gly206, and Arg207 each bind substrate. The active-site Proton donor is Lys60.

This sequence belongs to the OMP decarboxylase family. Type 1 subfamily. Homodimer.

The catalysed reaction is orotidine 5'-phosphate + H(+) = UMP + CO2. Its pathway is pyrimidine metabolism; UMP biosynthesis via de novo pathway; UMP from orotate: step 2/2. Catalyzes the decarboxylation of orotidine 5'-monophosphate (OMP) to uridine 5'-monophosphate (UMP). In Campylobacter lari (strain RM2100 / D67 / ATCC BAA-1060), this protein is Orotidine 5'-phosphate decarboxylase.